The primary structure comprises 125 residues: Crustacean hyperglycemic hormones 5 (125 aa).

A signal peptide spans 1–34 (MKPGNTSFNMVSFRMVWTAMMATLLVAGASSAGT). Disulfide bonds link Cys58-Cys94, Cys74-Cys90, and Cys77-Cys103. A Valine amide modification is found at Val123.

The protein belongs to the arthropod CHH/MIH/GIH/VIH hormone family. In terms of tissue distribution, produced by the medulla terminalis X-organ in the eyestalks and transported to the sinus gland where they are stored and released.

The protein resides in the secreted. Its function is as follows. Hormone found in the sinus gland of isopods and decapods which controls the blood sugar level. Has a secretagogue action over the amylase released from the midgut gland. May act as a stress hormone and may be involved in the control of molting and reproduction. This chain is Crustacean hyperglycemic hormones 5, found in Penaeus japonicus (Kuruma prawn).